The sequence spans 454 residues: Response regulator PleD (454 aa).

Response regulatory domains follow at residues arginine 4–threonine 120 and arginine 155–isoleucine 269. Residues aspartate 9, aspartate 10, aspartate 53, and methionine 55 each coordinate Mg(2+). At aspartate 53 the chain carries 4-aspartylphosphate. In terms of domain architecture, GGDEF spans aspartate 319–alanine 454. Positions 335 and 344 each coordinate substrate. The Proton acceptor role is filled by glutamate 370.

In terms of assembly, homodimer. Inactive monomer in solution. Phosphorylated by PleC and DivJ. Phosphorylation stimulates cyclase activity.

The protein localises to the cytoplasm. The enzyme catalyses 2 GTP = 3',3'-c-di-GMP + 2 diphosphate. The protein operates within purine metabolism; 3',5'-cyclic di-GMP biosynthesis. Its activity is regulated as follows. Allosterically inhibited by the product c-di-GMP. Its function is as follows. Response regulator that is part of a signal transduction pathway controlling cell differentiation in the swarmer-to-stalked cell transition. Functionally, catalyzes the condensation of two GTP molecules to the cyclic dinucleotide di-GMP (c-di-GMP), which acts as a secondary messenger. The polypeptide is Response regulator PleD (pleD) (Caulobacter vibrioides (strain ATCC 19089 / CIP 103742 / CB 15) (Caulobacter crescentus)).